The sequence spans 164 residues: Protein-export protein SecB (164 aa).

The protein belongs to the SecB family. Homotetramer, a dimer of dimers. One homotetramer interacts with 1 SecA dimer.

Its subcellular location is the cytoplasm. Functionally, one of the proteins required for the normal export of preproteins out of the cell cytoplasm. It is a molecular chaperone that binds to a subset of precursor proteins, maintaining them in a translocation-competent state. It also specifically binds to its receptor SecA. In Shewanella denitrificans (strain OS217 / ATCC BAA-1090 / DSM 15013), this protein is Protein-export protein SecB.